The following is a 225-amino-acid chain: Ras-related protein Rab-32 (225 aa).

Position 2 is an N-acetylalanine (Ala2). Residues Val36, Gly37, Lys38, Thr39, Ser40, Ser51, Gln52, Tyr54, and Thr57 each coordinate GTP. A Mg(2+)-binding site is contributed by Thr39. Positions 48–62 (QLFSQHYRATIGVDF) match the Switch 1 motif. Position 57 (Thr57) interacts with Mg(2+). A Phosphoserine modification is found at Ser71. Residue Asp81 participates in Mg(2+) binding. Positions 84, 143, 144, 146, 175, and 176 each coordinate GTP. The short motif at 84–97 (GQERFGNMTRVYYK) is the Switch 2 element. The segment at 178 to 197 (NINIEEAARFLVEKILVNHQ) is PKA-RII subunit binding domain. Residues Cys224 and Cys225 are each lipidated (S-geranylgeranyl cysteine).

Belongs to the small GTPase superfamily. Rab family. As to quaternary structure, interacts with ANKRD27. A decreased interaction with ANKRD27 seen in the presence of SGSM2. Interacts with LRRK2 (via N-terminus); this interaction results in stimulation of RAB10 phosphorylation by LRRK2. It depends on Mg(2+) as a cofactor. Widely expressed with high levels in heart, liver, kidney, bone marrow, testis, colon and fetal lung.

It is found in the mitochondrion. The protein localises to the mitochondrion outer membrane. The protein resides in the cytoplasmic vesicle. It localises to the phagosome. Its subcellular location is the phagosome membrane. It is found in the melanosome. The protein localises to the melanosome membrane. It carries out the reaction GTP + H2O = GDP + phosphate + H(+). Its activity is regulated as follows. Regulated by guanine the nucleotide exchange factor (GEF) BLOC-3 complex composed of HPS1 and HPS4 which promote the exchange of bound GDP for free GTP. Regulated by the GTPase activating protein (GAP) SGSM2/RUTBC1 which increases the GTP hydrolysis activity. Inhibited by GDP dissociation inhibitors (GDIs) which prevent Rab-GDP dissociation. The small GTPases Rab are key regulators of intracellular membrane trafficking, from the formation of transport vesicles to their fusion with membranes. Rabs cycle between an inactive GDP-bound form and an active GTP-bound form that is able to recruit to membranes different set of downstream effectors directly responsible for vesicle formation, movement, tethering and fusion. Also acts as an A-kinase anchoring protein by binding to the type II regulatory subunit of protein kinase A and anchoring it to the mitochondrion. Also involved in synchronization of mitochondrial fission. Plays a role in the maturation of phagosomes that engulf pathogens, such as S.aureus and M.tuberculosis. Plays an important role in the control of melanin production and melanosome biogenesis. In concert with RAB38, regulates the proper trafficking of melanogenic enzymes TYR, TYRP1 and DCT/TYRP2 to melanosomes in melanocytes. Stimulates phosphorylation of RAB10 'Thr-73' by LRRK2. The chain is Ras-related protein Rab-32 from Homo sapiens (Human).